Consider the following 278-residue polypeptide: Octanoyl-[GcvH]:protein N-octanoyltransferase (278 aa).

The 206-residue stretch at 44–249 folds into the BPL/LPL catalytic domain; that stretch reads SQSPPTLRAW…TLQQHGASLL (206 aa). Cysteine 148 acts as the Acyl-thioester intermediate in catalysis.

Belongs to the octanoyltransferase LipL family.

It carries out the reaction N(6)-octanoyl-L-lysyl-[glycine-cleavage complex H protein] + L-lysyl-[lipoyl-carrier protein] = N(6)-octanoyl-L-lysyl-[lipoyl-carrier protein] + L-lysyl-[glycine-cleavage complex H protein]. It functions in the pathway protein modification; protein lipoylation via endogenous pathway; protein N(6)-(lipoyl)lysine from octanoyl-[acyl-carrier-protein]. Its function is as follows. Catalyzes the amidotransfer (transamidation) of the octanoyl moiety from octanoyl-GcvH to the lipoyl domain of the E2 subunit of lipoate-dependent enzymes. This chain is Octanoyl-[GcvH]:protein N-octanoyltransferase, found in Halalkalibacterium halodurans (strain ATCC BAA-125 / DSM 18197 / FERM 7344 / JCM 9153 / C-125) (Bacillus halodurans).